A 427-amino-acid polypeptide reads, in one-letter code: Peptidase B (427 aa).

Mn(2+) is bound by residues Lys195 and Asp200. Residue Lys207 is part of the active site. Mn(2+)-binding residues include Asp218, Asp277, and Glu279. Residue Arg281 is part of the active site.

It belongs to the peptidase M17 family. In terms of assembly, homohexamer. Mn(2+) serves as cofactor.

It localises to the cytoplasm. The enzyme catalyses Release of an N-terminal amino acid, Xaa, from a peptide or arylamide. Xaa is preferably Glu or Asp but may be other amino acids, including Leu, Met, His, Cys and Gln.. Functionally, probably plays an important role in intracellular peptide degradation. This Shigella flexneri protein is Peptidase B.